Consider the following 484-residue polypeptide: Glutamate mutase epsilon subunit (484 aa).

Position 66 (Arg-66) interacts with L-glutamate. Position 68 (Gly-68) interacts with adenosylcob(III)alamin. Arg-100 contributes to the L-glutamate binding site. Asn-123 lines the adenosylcob(III)alamin pocket. Residues 149–150, Glu-171, and Tyr-177 contribute to the L-glutamate site; that span reads RH. Adenosylcob(III)alamin is bound at residue Pro-180. L-glutamate is bound at residue Tyr-181. 4 residues coordinate adenosylcob(III)alamin: Phe-297, Lys-326, Glu-330, and Ile-334.

The protein belongs to the methylaspartate mutase GlmE subunit family. In terms of assembly, heterotetramer composed of 2 epsilon subunits (GlmE) and 2 sigma subunits (GlmS). GlmE exists as a homodimer and GlmS as a monomer. The cofactor is adenosylcob(III)alamin.

The enzyme catalyses (2S,3S)-3-methyl-L-aspartate = L-glutamate. Its pathway is amino-acid degradation; L-glutamate degradation via mesaconate pathway; acetate and pyruvate from L-glutamate: step 1/4. Its function is as follows. Catalyzes the carbon skeleton rearrangement of L-glutamate to L-threo-3-methylaspartate ((2S,3S)-3-methylaspartate). The polypeptide is Glutamate mutase epsilon subunit (Desulfitobacterium hafniense (strain Y51)).